Reading from the N-terminus, the 383-residue chain is MTDYTPDETPGIALRDISKVYSSRTGDVVAVHALTLAVRSGEFFSLLGPSGCGKTTTLRMIAGFEEPTTGRILLEGRDVTDVPPHRRDVNMVFQNYALFPHLTVWENVAFGPKRKKLPREEIRRRVGEALELVDLVGREKRRPDELSGGQQQRVALARALVNRPRALLLDEPLGALDLKLRQAMQLELKRIQREAGVTFVYVTHDQGEALTMSDRIAVMNAGRVEQLGTPREIYETPSTPFVAGFIGTSNVISAPLARIEGAIALLATSADERVLVPLRVPVPPGASISATVRPEKIRLSLHPPDGDRCRLLGVVREVVYLGTATQYVVATSVAEQLVVYAQNDGTADLVPAPGDRIWLWWRPEHGYQLIHADATDVPEEAAP.

One can recognise an ABC transporter domain in the interval 12–246 (IALRDISKVY…PSTPFVAGFI (235 aa)). 48–55 (GPSGCGKT) is an ATP binding site.

Belongs to the ABC transporter superfamily. Spermidine/putrescine importer (TC 3.A.1.11.1) family. The complex is composed of two ATP-binding proteins (PotA), two transmembrane proteins (PotB and PotC) and a solute-binding protein (PotD).

Its subcellular location is the cell membrane. The enzyme catalyses ATP + H2O + polyamine-[polyamine-binding protein]Side 1 = ADP + phosphate + polyamineSide 2 + [polyamine-binding protein]Side 1.. Functionally, part of the ABC transporter complex PotABCD involved in spermidine/putrescine import. Responsible for energy coupling to the transport system. This is Spermidine/putrescine import ATP-binding protein PotA from Acidothermus cellulolyticus (strain ATCC 43068 / DSM 8971 / 11B).